The primary structure comprises 706 residues: Triadin (706 aa).

Residues 1 to 28 (MTEITAEGNASTTTTVIDSKNGSVPKSP) form a disordered region. At 1 to 47 (MTEITAEGNASTTTTVIDSKNGSVPKSPGKVLKRTVTEDLVTTFSSP) the chain is on the cytoplasmic side. The span at 8-24 (GNASTTTTVIDSKNGSV) shows a compositional bias: polar residues. A helical membrane pass occupies residues 48-68 (AAWLLVIALIITWSAVAVVMF). Residues 69–706 (DLVDYKNFSA…GKPNSPGPKQ (638 aa)) lie on the Lumenal side of the membrane. An N-linked (GlcNAc...) asparagine glycan is attached at N75. Residues 117-127 (DGDEEDDEGDE) show a composition bias toward acidic residues. Disordered regions lie at residues 117–265 (DGDE…EQKD), 281–663 (DLKP…KKQK), and 684–706 (FPVTPAQYPGESSGKPNSPGPKQ). Composition is skewed to basic and acidic residues over residues 128 to 254 (DTAK…ESKE), 309 to 358 (PEEK…KSPD), 372 to 432 (TKKD…KEEV), 443 to 518 (AKKE…EVKP), 525 to 552 (IKKEEKPEQDIMKPEKTALHGKPEEKVL), 570 to 588 (KKAEHQEKEPPSIKTDKPK), and 599 to 621 (ESGKKKIEKSEKEIKVPARRESH). N-linked (GlcNAc...) asparagine glycosylation is present at N625. Basic and acidic residues predominate over residues 628–651 (KAEKPARGSKEGFEDVPASKKAKE).

As to quaternary structure, interacts with CASQ2. Homooligomer of variable subunit number; disulfide-linked. Interacts with CASQ1 and RYR1 in skeletal muscle. In terms of processing, phosphorylated by CaMK2. N-glycosylated. In terms of tissue distribution, detected in skeletal muscle and in heart (at protein level). Detected in skeletal muscle and in heart.

It is found in the sarcoplasmic reticulum membrane. Its function is as follows. Contributes to the regulation of lumenal Ca2+ release via the sarcoplasmic reticulum calcium release channels RYR1 and RYR2, a key step in triggering skeletal and heart muscle contraction. Required for normal organization of the triad junction, where T-tubules and the sarcoplasmic reticulum terminal cisternae are in close contact. Required for normal skeletal muscle strength. Plays a role in excitation-contraction coupling in the heart and in regulating the rate of heart beats. The chain is Triadin (TRDN) from Oryctolagus cuniculus (Rabbit).